We begin with the raw amino-acid sequence, 76 residues long: DNA-directed RNA polymerase subunit Rpo5 (76 aa).

Belongs to the archaeal Rpo5/eukaryotic RPB5 RNA polymerase subunit family. Part of the RNA polymerase complex.

The protein localises to the cytoplasm. The catalysed reaction is RNA(n) + a ribonucleoside 5'-triphosphate = RNA(n+1) + diphosphate. In terms of biological role, DNA-dependent RNA polymerase (RNAP) catalyzes the transcription of DNA into RNA using the four ribonucleoside triphosphates as substrates. This Archaeoglobus fulgidus (strain ATCC 49558 / DSM 4304 / JCM 9628 / NBRC 100126 / VC-16) protein is DNA-directed RNA polymerase subunit Rpo5.